The sequence spans 217 residues: Mucosal pentraxin (217 aa).

The first 19 residues, 1 to 19, serve as a signal peptide directing secretion; sequence MEKLLLGVLLLAFLPEGMT. In terms of domain architecture, Pentraxin (PTX) spans 24–217; sequence RGKVFIFPEQ…KGYVVVKPKL (194 aa). Residues Cys55 and Cys114 are joined by a disulfide bond. Positions 77, 78, 155, 156, 157, and 167 each coordinate Ca(2+).

It belongs to the pentraxin family. In terms of assembly, homopentamer. Pentraxin (or pentaxin) have a discoid arrangement of 5 non-covalently bound subunits. The cofactor is Ca(2+).

The protein resides in the secreted. The polypeptide is Mucosal pentraxin (MPTX) (Bos taurus (Bovine)).